Reading from the N-terminus, the 340-residue chain is Ketol-acid reductoisomerase (NADP(+)) (340 aa).

The region spanning 3–182 (VQMEYEKDVK…GAARVGLLET (180 aa)) is the KARI N-terminal Rossmann domain. NADP(+) is bound by residues 26-29 (YGSQ), Arg49, Ser53, and 83-86 (DEIQ). His108 is an active-site residue. Gly134 serves as a coordination point for NADP(+). The region spanning 183–328 (TYKEETEEDL…AELRKAMPFV (146 aa)) is the KARI C-terminal knotted domain. 4 residues coordinate Mg(2+): Asp191, Glu195, Glu227, and Glu231. Ser252 contributes to the substrate binding site.

Belongs to the ketol-acid reductoisomerase family. Requires Mg(2+) as cofactor.

The enzyme catalyses (2R)-2,3-dihydroxy-3-methylbutanoate + NADP(+) = (2S)-2-acetolactate + NADPH + H(+). It catalyses the reaction (2R,3R)-2,3-dihydroxy-3-methylpentanoate + NADP(+) = (S)-2-ethyl-2-hydroxy-3-oxobutanoate + NADPH + H(+). Its pathway is amino-acid biosynthesis; L-isoleucine biosynthesis; L-isoleucine from 2-oxobutanoate: step 2/4. It functions in the pathway amino-acid biosynthesis; L-valine biosynthesis; L-valine from pyruvate: step 2/4. In terms of biological role, involved in the biosynthesis of branched-chain amino acids (BCAA). Catalyzes an alkyl-migration followed by a ketol-acid reduction of (S)-2-acetolactate (S2AL) to yield (R)-2,3-dihydroxy-isovalerate. In the isomerase reaction, S2AL is rearranged via a Mg-dependent methyl migration to produce 3-hydroxy-3-methyl-2-ketobutyrate (HMKB). In the reductase reaction, this 2-ketoacid undergoes a metal-dependent reduction by NADPH to yield (R)-2,3-dihydroxy-isovalerate. The chain is Ketol-acid reductoisomerase (NADP(+)) from Streptococcus thermophilus (strain ATCC BAA-491 / LMD-9).